A 208-amino-acid polypeptide reads, in one-letter code: Cysteine-rich protein 2 (208 aa).

Residues 5-57 (CPKCDKTVYFAEKVSSLGKDWHKFCLKCERCNKTLTPGGHAEHDGKPFCHKPC) form the LIM zinc-binding 1 domain. Residue Lys23 is modified to N6-acetyllysine. The residue at position 104 (Ser104) is a Phosphoserine. The region spanning 126–178 (CPRCNKRVYFAEKVTSLGKDWHRPCLRCERCSKTLTPGGHAEHDGQPYCHKPC) is the LIM zinc-binding 2 domain. Lys138 and Lys144 each carry N6-acetyllysine.

As to quaternary structure, interacts with TGFB1I1. Expressed more abundantly in liver and kidney of females than that of males. Equally expressed in brain, lung and heart.

The chain is Cysteine-rich protein 2 (Crip2) from Rattus norvegicus (Rat).